Consider the following 320-residue polypeptide: Lipoyl synthase (320 aa).

[4Fe-4S] cluster is bound by residues cysteine 67, cysteine 72, cysteine 78, cysteine 93, cysteine 97, cysteine 100, and serine 307. Residues 79–296 (FNHGTATFMI…REKAAEMGFE (218 aa)) form the Radical SAM core domain.

This sequence belongs to the radical SAM superfamily. Lipoyl synthase family. [4Fe-4S] cluster is required as a cofactor.

It is found in the cytoplasm. It carries out the reaction [[Fe-S] cluster scaffold protein carrying a second [4Fe-4S](2+) cluster] + N(6)-octanoyl-L-lysyl-[protein] + 2 oxidized [2Fe-2S]-[ferredoxin] + 2 S-adenosyl-L-methionine + 4 H(+) = [[Fe-S] cluster scaffold protein] + N(6)-[(R)-dihydrolipoyl]-L-lysyl-[protein] + 4 Fe(3+) + 2 hydrogen sulfide + 2 5'-deoxyadenosine + 2 L-methionine + 2 reduced [2Fe-2S]-[ferredoxin]. It functions in the pathway protein modification; protein lipoylation via endogenous pathway; protein N(6)-(lipoyl)lysine from octanoyl-[acyl-carrier-protein]: step 2/2. Catalyzes the radical-mediated insertion of two sulfur atoms into the C-6 and C-8 positions of the octanoyl moiety bound to the lipoyl domains of lipoate-dependent enzymes, thereby converting the octanoylated domains into lipoylated derivatives. In Actinobacillus succinogenes (strain ATCC 55618 / DSM 22257 / CCUG 43843 / 130Z), this protein is Lipoyl synthase.